A 637-amino-acid chain; its full sequence is Tumor protein p73 (637 aa).

A transactivation region spans residues 1–46; sequence MAQSTTTSPDGGTTFEHLWSSLEPDSTYFDLPQSSRGNNEVVGGTD. The residue at position 27 (Thr27) is a Phosphothreonine. Tyr28 is modified (phosphotyrosine; by SRC and HCK). A disordered region spans residues 78-104; that stretch reads RAASASPYTPEHAASVPTHSPYAQPSS. Over residues 94–104 the composition is skewed to polar residues; the sequence is PTHSPYAQPSS. Residue Tyr99 is modified to Phosphotyrosine. The tract at residues 131-310 is DNA-binding; the sequence is FQQSSTAKSA…DRKADEDHYR (180 aa). Residues Cys194, His197, Cys258, and Cys262 each contribute to the Zn(2+) site. The span at 301 to 311 shows a compositional bias: basic and acidic residues; it reads DRKADEDHYRE. The tract at residues 301 to 351 is disordered; that stretch reads DRKADEDHYREQQALNESSAKNGAASKRAFKQSPPAVPALGPGVKKRRHGD. Residues 345–380 form an interaction with HIPK2 region; that stretch reads KKRRHGDEDTYYLQVRGRENFEILMKLKESLELMEL. The interval 345-386 is oligomerization; sequence KKRRHGDEDTYYLQVRGRENFEILMKLKESLELMELVPQPLV. The PPxY motif signature appears at 483–487; it reads PPPPY. Residues 485–551 form the SAM domain; sequence PPYHADPSLV…WRGLQDLKQG (67 aa). A Glycyl lysine isopeptide (Lys-Gly) (interchain with G-Cter in SUMO); in isoform Alpha cross-link involves residue Lys628. Lys628 participates in a covalent cross-link: Glycyl lysine isopeptide (Lys-Gly) (interchain with G-Cter in SUMO2).

This sequence belongs to the p53 family. As to quaternary structure, found in a complex with p53/TP53 and CABLES1. The C-terminal oligomerization domain binds to the ABL1 tyrosine kinase SH3 domain. Interacts with HECW2. Isoforms Alpha and Beta interact with HIPK2. Isoform Alpha interacts with RANBP9. Interacts with WWOX. Isoform Beta interacts homotypically and with p53, whereas isoform Alpha does not. Interacts (via SAM domain) with FBXO45 (via B30.2/SPRY domain). Interacts with YAP1 (phosphorylated form). Interacts with HCK (via SH3 domain); this inhibits TP73 activity and degradation. Zn(2+) serves as cofactor. In terms of processing, isoform Alpha (but not isoform Beta) is sumoylated on Lys-628, which potentiates proteasomal degradation but does not affect transcriptional activity. Post-translationally, polyubiquitinated by RCHY1/PIRH2; leading to its degradation by the proteasome.

Its subcellular location is the nucleus. The protein localises to the cytoplasm. Participates in the apoptotic response to DNA damage. May be a tumor suppressor protein. Is an activator of FOXJ1 expression, essential for the positive regulation of lung ciliated cell differentiation. The protein is Tumor protein p73 (TP73) of Chlorocebus aethiops (Green monkey).